We begin with the raw amino-acid sequence, 490 residues long: Aspartyl/glutamyl-tRNA(Asn/Gln) amidotransferase subunit B (490 aa).

Belongs to the GatB/GatE family. GatB subfamily. In terms of assembly, heterotrimer of A, B and C subunits.

The catalysed reaction is L-glutamyl-tRNA(Gln) + L-glutamine + ATP + H2O = L-glutaminyl-tRNA(Gln) + L-glutamate + ADP + phosphate + H(+). It carries out the reaction L-aspartyl-tRNA(Asn) + L-glutamine + ATP + H2O = L-asparaginyl-tRNA(Asn) + L-glutamate + ADP + phosphate + 2 H(+). Allows the formation of correctly charged Asn-tRNA(Asn) or Gln-tRNA(Gln) through the transamidation of misacylated Asp-tRNA(Asn) or Glu-tRNA(Gln) in organisms which lack either or both of asparaginyl-tRNA or glutaminyl-tRNA synthetases. The reaction takes place in the presence of glutamine and ATP through an activated phospho-Asp-tRNA(Asn) or phospho-Glu-tRNA(Gln). The protein is Aspartyl/glutamyl-tRNA(Asn/Gln) amidotransferase subunit B of Burkholderia ambifaria (strain MC40-6).